The sequence spans 294 residues: Transmembrane protein 178B (294 aa).

Residues 1–23 (MAAGRLLLYTGLSLALCALGMLA) form the signal peptide. 2 N-linked (GlcNAc...) asparagine glycosylation sites follow: N148 and N152. Helical transmembrane passes span 172–192 (AGFMGMAVAIILFGWIIGVLG), 206–226 (LLFLMGGTFCIISLCTCVAGI), and 252–272 (MFCAWGGLGLTLISGFFCTLA).

This sequence belongs to the TMEM178 family.

The protein resides in the membrane. The sequence is that of Transmembrane protein 178B (TMEM178B) from Homo sapiens (Human).